Reading from the N-terminus, the 236-residue chain is Probable transcriptional regulatory protein Suden_1389 (236 aa).

It belongs to the TACO1 family.

Its subcellular location is the cytoplasm. This is Probable transcriptional regulatory protein Suden_1389 from Sulfurimonas denitrificans (strain ATCC 33889 / DSM 1251) (Thiomicrospira denitrificans (strain ATCC 33889 / DSM 1251)).